Reading from the N-terminus, the 80-residue chain is Serine palmitoyltransferase small subunit A-B (80 aa).

The Cytoplasmic segment spans residues 1-21; the sequence is MKVSCEDVNGPRSSLGRAWNH. The chain crosses the membrane as a helical span at residues 22–38; that stretch reads VSWLYYQYLLVTALYML. Residues 39–43 are Lumenal-facing; it reads EPWER. Residues 44–66 form a helical membrane-spanning segment; the sequence is TVFNSMLVSIVGMALYTGYIFMP. At 67 to 80 the chain is on the cytoplasmic side; the sequence is QHILAILHYFEIVQ.

The protein belongs to the SPTSS family. SPTSSA subfamily. Component of the serine palmitoyltransferase (SPT) complex, which is composed of SPTLC1, SPTLC2 or SPTLC3 and SPTSSA or SPTSSB. The heterodimer consisting of SPTLC1 and SPTLC2/SPTLC3 forms the catalytic core of the enzyme, while SPTSSA or SPTSSB subunits determine substrate specificity. SPT also interacts with ORMDL proteins, especially ORMDL3, which negatively regulate SPT activity in the presence of ceramides.

The protein localises to the endoplasmic reticulum membrane. It functions in the pathway lipid metabolism; sphingolipid metabolism. Component of the serine palmitoyltransferase multisubunit enzyme (SPT) that catalyzes the initial and rate-limiting step in sphingolipid biosynthesis by condensing L-serine and activated acyl-CoA (most commonly palmitoyl-CoA) to form long-chain bases. The SPT complex is composed of SPTLC1, SPTLC2 or SPTLC3 and SPTSSA or SPTSSB. Within this complex, the heterodimer consisting of SPTLC1 and SPTLC2/SPTLC3 forms the catalytic core. Within the SPT complex, SPTSSA stimulates the catalytic activity and plays a role in substrate specificity, which depends upon the overall complex composition. The SPTLC1-SPTLC2-SPTSSA complex shows a strong preference for C16-CoA substrate, while the SPTLC1-SPTLC3-SPTSSA isozyme uses both C14-CoA and C16-CoA as substrates, with a slight preference for C14-CoA. Independently of its action as a SPT component, may be involved in MBOAT7 localization to mitochondria-associated membranes, a membrane bridge between the endoplasmic reticulum and mitochondria, may hence affect MBOAT7-catalyzed incorporation of arachidonic acid into phosphatidylinositol. This is Serine palmitoyltransferase small subunit A-B (sptssa-b) from Xenopus laevis (African clawed frog).